We begin with the raw amino-acid sequence, 420 residues long: MKVGGFQPVRGTKDLLSEEYYKLFHIQNVAQEIGERFGFMPVQTPIFEFQEVFCKTLGDSTDVIGKEMYTFADRGGDVLALRPEFTAAIVRLLLSEKMQPPARLFTAGPVFRYERPQKCRQRQFHQINYECFGAGGSQADAEIISLAYCVLEVFGLHCDVTLEINSLGSSECMNAYRASLLSFFEKYRSELSEDSRRRLQTNPLRILDSKDATDKEILSTAPSIEDFYDAETRASFEGLKDHLTNLGIPYAVNRRLVRGLDYYTGTVFEYKTSSLGAQDAIIAGGRYDNLVAAMGGENVPAIGFAGGVERLAALMSYSRTRKFCVFILPISEEVVSHAMRITYEIRRTLSGVQVICDIVTRLKTGIKRADRQKADIALILGDEEVNRNAVSCKNMLTGKQEEISISNITEYLKAMMAERQ.

This sequence belongs to the class-II aminoacyl-tRNA synthetase family. Homodimer.

The protein localises to the cytoplasm. The catalysed reaction is tRNA(His) + L-histidine + ATP = L-histidyl-tRNA(His) + AMP + diphosphate + H(+). This is Histidine--tRNA ligase from Anaplasma phagocytophilum (strain HZ).